A 274-amino-acid chain; its full sequence is HTH-type transcriptional regulator GadX (274 aa).

The region spanning 145-242 (TRVCTVINNN…GMTPTEYQER (98 aa)) is the HTH araC/xylS-type domain. 2 consecutive DNA-binding regions (H-T-H motif) follow at residues 162–183 (ARIASELLMSPSLLKKKLREEG) and 209–232 (IKRVAVSCGYHSVSYFIYVFRNYY).

As to quaternary structure, homodimer.

Functionally, positively regulates the expression of about fifteen genes involved in acid resistance such as gadA, gadB and gadC. Depending on the conditions (growth phase and medium), can repress gadW. This is HTH-type transcriptional regulator GadX (gadX) from Escherichia coli O6:H1 (strain CFT073 / ATCC 700928 / UPEC).